A 116-amino-acid chain; its full sequence is Protein V2 (116 aa).

The protein belongs to the geminiviridae protein AV2/V2 family. In terms of assembly, interacts with host SGS3.

Its subcellular location is the host cytoplasm. The protein resides in the host perinuclear region. In terms of biological role, through its interaction with host SGS3, acts as a suppressor of RNA-mediated gene silencing, also known as post-transcriptional gene silencing (PTGS), a mechanism of plant viral defense that limits the accumulation of viral RNAs. This is Protein V2 from Tomato yellow leaf curl virus (strain Israel) (TYLCV).